Here is a 215-residue protein sequence, read N- to C-terminus: Venom allergen 5.02 (215 aa).

Residues 1 to 10 form the signal peptide; the sequence is PIINLSFGEA. Intrachain disulfides connect Cys-14–Cys-26, Cys-18–Cys-111, Cys-36–Cys-104, and Cys-181–Cys-198. The SCP domain maps to 55 to 200; the sequence is VNRHNQFRQK…WHTHYLVCNY (146 aa).

This sequence belongs to the CRISP family. Venom allergen 5-like subfamily. As to expression, expressed by the venom gland.

The protein resides in the secreted. This chain is Venom allergen 5.02, found in Dolichovespula maculata (Bald-faced hornet).